Reading from the N-terminus, the 447-residue chain is GTPase Der (447 aa).

2 EngA-type G domains span residues 3–167 (PVIA…FAER) and 181–354 (TRIA…AAAM). GTP is bound by residues 9 to 16 (GRPNVGKS), 56 to 60 (DTGGF), 119 to 122 (NKAE), 187 to 194 (GRPNVGKS), 234 to 238 (DTAGL), and 299 to 302 (NKWD). The KH-like domain occupies 355-439 (VKLPTPKLTR…PLRIEFRTNK (85 aa)).

The protein belongs to the TRAFAC class TrmE-Era-EngA-EngB-Septin-like GTPase superfamily. EngA (Der) GTPase family. Associates with the 50S ribosomal subunit.

GTPase that plays an essential role in the late steps of ribosome biogenesis. This is GTPase Der from Ralstonia pickettii (strain 12J).